The following is a 385-amino-acid chain: POU domain, class 3, transcription factor 2-B (385 aa).

3 disordered regions span residues 106-136 (LVHP…SSNG), 149-209 (NGMI…TPTS), and 351-385 (EKRM…TSVQ). The span at 122–136 (STGSTHLSSMASSNG) shows a compositional bias: polar residues. Residues 165–178 (LRDSHDDHHGDHGH) are compositionally biased toward basic and acidic residues. The span at 179-196 (QQPSQTQQQQQQHSQLQG) shows a compositional bias: low complexity. The POU-specific domain occupies 204–278 (EDTPTSDDLE…LLNKWLEEAD (75 aa)). A DNA-binding region (homeobox) is located at residues 296-355 (KRKKRTSIEVSVKGALESHFLKCPKPAAQEITSLADSLQLEKEVVRVWFCNRRQKEKRMT).

This sequence belongs to the POU transcription factor family. Class-3 subfamily. As to expression, expressed in the developing brain and spinal cord. Also found in a restricted region of the auditory vesicle during development. In the adult, expression is restricted to the brain.

It localises to the nucleus. Functionally, transcription factor that may be implicated in patterning of the central nervous system during early development. The sequence is that of POU domain, class 3, transcription factor 2-B (pou3f2-b) from Xenopus laevis (African clawed frog).